The sequence spans 348 residues: 5-deoxyribose 1-phosphate isomerase (348 aa).

Substrate-binding positions include 49-51, R92, and Q199; that span reads RGA. D240 functions as the Proton donor in the catalytic mechanism. Residue 250 to 251 participates in substrate binding; sequence NK.

It belongs to the EIF-2B alpha/beta/delta subunits family. DrdI subfamily. In terms of assembly, homodimer.

The enzyme catalyses 5-deoxy-alpha-D-ribose 1-phosphate = 5-deoxy-D-ribulose 1-phosphate. It carries out the reaction 5-(methylsulfanyl)-alpha-D-ribose 1-phosphate = 5-(methylsulfanyl)-D-ribulose 1-phosphate. The protein operates within carbohydrate degradation. In terms of biological role, catalyzes the isomerization of 5-deoxy-alpha-D-ribose 1-phosphate to 5-deoxy-D-ribulose 1-phosphate, as part of a 5-deoxyribose salvage pathway that recycles this toxic radical SAM enzyme by-product to mainstream metabolites. Also seems to be able to catalyze the conversion of methylthioribose-1-phosphate (MTR-1-P) into methylthioribulose-1-phosphate (MTRu-1-P). However this enzyme may not function in methionine salvage in B.thuringiensis since it exists a paralog (MtnA) present in the methionine salvage pathway cluster. The sequence is that of 5-deoxyribose 1-phosphate isomerase from Bacillus thuringiensis serovar kurstaki (strain ATCC 35866 / NRRL B-4488 / HD73).